A 1738-amino-acid polypeptide reads, in one-letter code: MEHSTPLNEEIVHKKNDENWVIAQKKVFTNWCNIFLNQRSQKIEDLETDLYDGILLGSLLEILSGKNVILSKCKQLKTRLHYINNLNFSLKFIGDEGLRLVGVASEDITDGNLKLILGLVWTLILRYQIQSMQNSKSSQQNLHSSTKPSELMLNWVKSQISDYGHHIKDLTTSFQNGLLFCALVHKLVPEKLDYKSLSESDSLGNLTLAFEVANKELGIPSILDPHDIITTPDELSILTYISLFPKVYQQTLEPLNNNNNISPSLSSSSSSLLNTPNKRNSIQLSKSTSFEQQNQQQQQQNLLSPNSYRNSISFSKSPSFEGSQSTGSSRSISPISSPIKNSTTGNSNLSKSTSFEKIEASNTTNNNTIIIAEESRVIEKIVEKIIEVEKIVEVEKIVEVEKIVEVEKIVEVEKIVKVDDIEKLTNLQDQLTEQQQQYQEKSLKLVNLELELQEKSNQLVDKSNQLSTMQATNSELMEKIGGLMNDLTDIPTQDIKEKDEIIANLKIESEKNLKCFQDDFNALQSRYSLTIEQTSQLQDRIKQLINELQERDDKFIEFTNSSNQSLADNQRVIDQLTNEKQSITLQLQDQQDIKEKEFQFEKQQLLSQIDSITTNIQEYQDKFNNLQQEFNTQQTLNQQETHRLTQQLYQINTDYNEKQTQLQSEIKDNQTINEQLNKQLSEKDKEIEKLSNQQEQQQDEKINNLLLEIKEKDCLIERINQQLLENIDLNSKYQQLLLEFENFKLNSSKEKENQLNELQSKQDERFNQLNDEKLEKEKQLQSIEDEFNQYKQQQLSSNSNIDQQLQSTIIELSELKEQKELNDSKLIEKEKQLQQLQQEFDQLNEKNQKDHQDQLELLEKQLKQLQQEYDQLNETNQSIENQLNQQNLINKENLNEKEQELLKLQNQLNQQIEKIQFDQQEFSKQNSINIELVNEKNEKLIQLQQDYDQLKQQNRSNDEKDENDLIEKENQLKSIQNELNQLIEKNESDHKEQQLKQQSIENDLIEKENQIQQLQSQLNEQRQQQSNQLSEKDQQLNQLIEKNQFDQKEQQLKQQSIENDLFEKENQIQQLQSQLNEQRQQQSNQLSEKDQQLNQLIEKNESDQKEQQLKQQSIENDLIEKENQIQQLQLQLNEQRQLQSEVSIDNDKILELEKQLKQCQSDLLKLNDEKQQQDKQLQDKQIEFDQLQLTFNQFKNDKDSQFIQLQDDQKQQLQSIQQDLNQLKQENQEKEKQLSEKDEKLQSIQFENQEKEKQLSEKDEKLQSIQQNLNQLNDENQEKVKQFSEKDEKLQSIQQDLNQLKQENQEKEKQLSEKDEKLQSIQQDLNQLNDDQIKKNEKLKEKEEQLLKLQQDFNDQQSQQLKQLEEKLSEKENQLQQLKQENEINQLNQQQQSNEIIQQLKDQLLKQQQQEQQENNNEKEIERLIQEIEQLKQQQEIDQSELSNKEIKIQTTQQEFDQLSHNRSKDQLHLQQLQQELDQLKQSFDDQDHQFKKVIDERYNLQLQLEQSTLSNNQLDQLLKEKLKPLELDSNEKQKTIDDLLSNISNLQISLQNDKDLISERNNSIKTLESRITQQLSLLDEKDNLIKDLQQQKQQQQQPPTASSSPSSSPSLLSSTPTPKPQRPNQIEIDRLVNEIVNRNQDLIRKNKTKFYKLENGDYIVNSIIYRLSLDDDNDSDLIAQEYENGNSTTFEKSLRIFPSKNTRPIFDWRALFFIGAAVLAISTLFSSSRPIKYEKPT.

Residues 1–248 (MEHSTPLNEE…TYISLFPKVY (248 aa)) are actin-binding. Residues 1 to 1705 (MEHSTPLNEE…RIFPSKNTRP (1705 aa)) are Cytoplasmic-facing. Calponin-homology (CH) domains follow at residues 22-128 (IAQK…LRYQ) and 146-249 (TKPS…KVYQ). Disordered regions lie at residues 285–350 (SKST…SNLS), 1068–1090 (IQQLQSQLNEQRQQQSNQLSEKD), and 1589–1627 (LQQQKQQQQQPPTASSSPSSSPSLLSSTPTPKPQRPNQI). Residues 292-301 (QQNQQQQQQN) are compositionally biased toward low complexity. A compositionally biased stretch (polar residues) spans 302-316 (LLSPNSYRNSISFSK). Low complexity-rich tracts occupy residues 317 to 344 (SPSFEGSQSTGSSRSISPISSPIKNSTT), 1068 to 1086 (IQQLQSQLNEQRQQQSNQL), and 1589 to 1617 (LQQQKQQQQQPPTASSSPSSSPSLLSSTP). The stretch at 373–1598 (EESRVIEKIV…LQQQKQQQQQ (1226 aa)) forms a coiled coil. Residues 1706-1726 (IFDWRALFFIGAAVLAISTLF) traverse the membrane as a helical; Anchor for type IV membrane protein segment.

Belongs to the alpha-actinin family.

The protein resides in the nucleus membrane. It localises to the endoplasmic reticulum membrane. It is found in the golgi apparatus. Its subcellular location is the golgi stack membrane. The protein localises to the cytoplasm. The protein resides in the cytoskeleton. It localises to the microtubule organizing center. It is found in the centrosome. Functionally, may function as linker between cellular membranes and the actin cytoskeleton. Required for normal development of fruiting bodies. In Dictyostelium discoideum (Social amoeba), this protein is Interaptin (abpD).